The primary structure comprises 617 residues: UvrABC system protein C (617 aa).

The GIY-YIG domain maps to Thr-11–Val-85. Positions Ala-194–Leu-229 constitute a UVR domain.

This sequence belongs to the UvrC family. As to quaternary structure, interacts with UvrB in an incision complex.

The protein localises to the cytoplasm. In terms of biological role, the UvrABC repair system catalyzes the recognition and processing of DNA lesions. UvrC both incises the 5' and 3' sides of the lesion. The N-terminal half is responsible for the 3' incision and the C-terminal half is responsible for the 5' incision. The chain is UvrABC system protein C from Deinococcus radiodurans (strain ATCC 13939 / DSM 20539 / JCM 16871 / CCUG 27074 / LMG 4051 / NBRC 15346 / NCIMB 9279 / VKM B-1422 / R1).